We begin with the raw amino-acid sequence, 436 residues long: Adenosylmethionine-8-amino-7-oxononanoate aminotransferase (436 aa).

Tryptophan 66 provides a ligand contact to substrate. Position 126–127 (126–127 (GS)) interacts with pyridoxal 5'-phosphate. Tyrosine 159 serves as a coordination point for substrate. Position 256 (aspartate 256) interacts with pyridoxal 5'-phosphate. Substrate is bound by residues lysine 285 and glycine 318. Lysine 285 carries the post-translational modification N6-(pyridoxal phosphate)lysine. Pyridoxal 5'-phosphate is bound at residue 319–320 (PT). Residue arginine 402 coordinates substrate.

The protein belongs to the class-III pyridoxal-phosphate-dependent aminotransferase family. BioA subfamily. As to quaternary structure, homodimer. Pyridoxal 5'-phosphate is required as a cofactor.

The protein localises to the cytoplasm. It catalyses the reaction (8S)-8-amino-7-oxononanoate + S-adenosyl-L-methionine = S-adenosyl-4-methylsulfanyl-2-oxobutanoate + (7R,8S)-7,8-diammoniononanoate. It participates in cofactor biosynthesis; biotin biosynthesis; 7,8-diaminononanoate from 8-amino-7-oxononanoate (SAM route): step 1/1. Its function is as follows. Catalyzes the transfer of the alpha-amino group from S-adenosyl-L-methionine (SAM) to 7-keto-8-aminopelargonic acid (KAPA) to form 7,8-diaminopelargonic acid (DAPA). It is the only aminotransferase known to utilize SAM as an amino donor. The sequence is that of Adenosylmethionine-8-amino-7-oxononanoate aminotransferase from Mycobacterium leprae (strain TN).